The following is a 168-amino-acid chain: Transcription antitermination protein NusB (168 aa).

The protein belongs to the NusB family.

Functionally, involved in transcription antitermination. Required for transcription of ribosomal RNA (rRNA) genes. Binds specifically to the boxA antiterminator sequence of the ribosomal RNA (rrn) operons. The polypeptide is Transcription antitermination protein NusB (Chlamydia trachomatis serovar L2 (strain ATCC VR-902B / DSM 19102 / 434/Bu)).